We begin with the raw amino-acid sequence, 270 residues long: 3-methyl-2-oxobutanoate hydroxymethyltransferase (270 aa).

The Mg(2+) site is built by aspartate 43 and aspartate 82. Residues 43–44 (DS), aspartate 82, and lysine 112 each bind 3-methyl-2-oxobutanoate. Residue glutamate 114 participates in Mg(2+) binding. The active-site Proton acceptor is glutamate 179.

The protein belongs to the PanB family. As to quaternary structure, homodecamer; pentamer of dimers. Mg(2+) is required as a cofactor.

The protein localises to the cytoplasm. It carries out the reaction 3-methyl-2-oxobutanoate + (6R)-5,10-methylene-5,6,7,8-tetrahydrofolate + H2O = 2-dehydropantoate + (6S)-5,6,7,8-tetrahydrofolate. It functions in the pathway cofactor biosynthesis; (R)-pantothenate biosynthesis; (R)-pantoate from 3-methyl-2-oxobutanoate: step 1/2. Its function is as follows. Catalyzes the reversible reaction in which hydroxymethyl group from 5,10-methylenetetrahydrofolate is transferred onto alpha-ketoisovalerate to form ketopantoate. This Oceanobacillus iheyensis (strain DSM 14371 / CIP 107618 / JCM 11309 / KCTC 3954 / HTE831) protein is 3-methyl-2-oxobutanoate hydroxymethyltransferase.